The following is a 180-amino-acid chain: ATP synthase subunit delta (180 aa).

This sequence belongs to the ATPase delta chain family. In terms of assembly, F-type ATPases have 2 components, F(1) - the catalytic core - and F(0) - the membrane proton channel. F(1) has five subunits: alpha(3), beta(3), gamma(1), delta(1), epsilon(1). F(0) has three main subunits: a(1), b(2) and c(10-14). The alpha and beta chains form an alternating ring which encloses part of the gamma chain. F(1) is attached to F(0) by a central stalk formed by the gamma and epsilon chains, while a peripheral stalk is formed by the delta and b chains.

It is found in the cell inner membrane. F(1)F(0) ATP synthase produces ATP from ADP in the presence of a proton or sodium gradient. F-type ATPases consist of two structural domains, F(1) containing the extramembraneous catalytic core and F(0) containing the membrane proton channel, linked together by a central stalk and a peripheral stalk. During catalysis, ATP synthesis in the catalytic domain of F(1) is coupled via a rotary mechanism of the central stalk subunits to proton translocation. In terms of biological role, this protein is part of the stalk that links CF(0) to CF(1). It either transmits conformational changes from CF(0) to CF(1) or is implicated in proton conduction. The sequence is that of ATP synthase subunit delta from Anaplasma phagocytophilum (strain HZ).